We begin with the raw amino-acid sequence, 416 residues long: Cotranscriptional regulator ARB2A homolog (416 aa).

The signal sequence occupies residues methionine 1–glycine 23. The segment at alanine 211–arginine 248 is disordered. A compositionally biased stretch (basic and acidic residues) spans proline 223–glutamate 236. The active-site Nucleophile is serine 293. Residue asparagine 397 is glycosylated (N-linked (GlcNAc...) asparagine).

The protein belongs to the ARB2A family.

It is found in the nucleus. It localises to the cytoplasm. In terms of biological role, may play role in the regulation of alternative splicing. May have hydrolase activity. This Gallus gallus (Chicken) protein is Cotranscriptional regulator ARB2A homolog (ARB2A).